Reading from the N-terminus, the 382-residue chain is Protein phosphatase 1A (382 aa).

Gly-2 carries the N-myristoyl glycine lipid modification. One can recognise a PPM-type phosphatase domain in the interval 23–291 (RYGLSSMQGW…DNMSVILICF (269 aa)). Mn(2+)-binding residues include Asp-60, Gly-61, Asp-239, and Asp-282. A phosphoserine mark is found at Ser-375 and Ser-377.

The protein belongs to the PP2C family. In terms of assembly, monomer. Interacts with SMAD2; the interaction dephosphorylates SMAD2 in its C-terminal SXS motif resulting in disruption of the SMAD2/SMAD4 complex, SMAD2 nuclear export and termination of the TGF-beta-mediated signaling. Interacts with SMAD2; the interaction dephosphorylates SMAD2 in its C-terminal SXS motif resulting in disruption of the SMAD2/SMAD4 complex, SMAD2 nuclear export and termination of the TGF-beta-mediated signaling. Interacts with the phosphorylated form of IKBKB/IKKB. Requires Mg(2+) as cofactor. Mn(2+) serves as cofactor. In terms of processing, N-myristoylation is essential for the recognition of its substrates for dephosphorylation.

The protein resides in the nucleus. Its subcellular location is the cytoplasm. It is found in the cytosol. The protein localises to the membrane. The enzyme catalyses O-phospho-L-seryl-[protein] + H2O = L-seryl-[protein] + phosphate. It carries out the reaction O-phospho-L-threonyl-[protein] + H2O = L-threonyl-[protein] + phosphate. Enzyme with a broad specificity. Negatively regulates TGF-beta signaling through dephosphorylating SMAD2 and SMAD3, resulting in their dissociation from SMAD4, nuclear export of the SMADs and termination of the TGF-beta-mediated signaling. Dephosphorylates PRKAA1 and PRKAA2. Plays an important role in the termination of TNF-alpha-mediated NF-kappa-B activation through dephosphorylating and inactivating IKBKB/IKKB. The chain is Protein phosphatase 1A (PPM1A) from Oryctolagus cuniculus (Rabbit).